Here is a 293-residue protein sequence, read N- to C-terminus: Pyridoxal 5'-phosphate synthase subunit PdxS (293 aa).

A D-ribose 5-phosphate-binding site is contributed by Asp-23. Lys-80 (schiff-base intermediate with D-ribose 5-phosphate) is an active-site residue. Gly-152 is a D-ribose 5-phosphate binding site. D-glyceraldehyde 3-phosphate is bound at residue Arg-164. Residues Gly-213 and 234–235 contribute to the D-ribose 5-phosphate site; that span reads GS.

This sequence belongs to the PdxS/SNZ family. As to quaternary structure, in the presence of PdxT, forms a dodecamer of heterodimers.

It catalyses the reaction aldehydo-D-ribose 5-phosphate + D-glyceraldehyde 3-phosphate + L-glutamine = pyridoxal 5'-phosphate + L-glutamate + phosphate + 3 H2O + H(+). Its pathway is cofactor biosynthesis; pyridoxal 5'-phosphate biosynthesis. In terms of biological role, catalyzes the formation of pyridoxal 5'-phosphate from ribose 5-phosphate (RBP), glyceraldehyde 3-phosphate (G3P) and ammonia. The ammonia is provided by the PdxT subunit. Can also use ribulose 5-phosphate and dihydroxyacetone phosphate as substrates, resulting from enzyme-catalyzed isomerization of RBP and G3P, respectively. The protein is Pyridoxal 5'-phosphate synthase subunit PdxS of Syntrophus aciditrophicus (strain SB).